Here is a 459-residue protein sequence, read N- to C-terminus: UDP-N-acetylmuramoylalanine--D-glutamate ligase (459 aa).

131-137 contacts ATP; it reads GANGKST.

The protein belongs to the MurCDEF family.

The protein resides in the cytoplasm. It carries out the reaction UDP-N-acetyl-alpha-D-muramoyl-L-alanine + D-glutamate + ATP = UDP-N-acetyl-alpha-D-muramoyl-L-alanyl-D-glutamate + ADP + phosphate + H(+). The protein operates within cell wall biogenesis; peptidoglycan biosynthesis. Its function is as follows. Cell wall formation. Catalyzes the addition of glutamate to the nucleotide precursor UDP-N-acetylmuramoyl-L-alanine (UMA). The polypeptide is UDP-N-acetylmuramoylalanine--D-glutamate ligase (Methylococcus capsulatus (strain ATCC 33009 / NCIMB 11132 / Bath)).